A 418-amino-acid polypeptide reads, in one-letter code: Tyrosine--tRNA ligase 1 (418 aa).

Position 34 (Tyr-34) interacts with L-tyrosine. The 'HIGH' region motif lies at 39–48 (PTADSLHIGH). 2 residues coordinate L-tyrosine: Tyr-169 and Gln-173. The short motif at 230 to 234 (KFGKT) is the 'KMSKS' region element. Residue Lys-233 coordinates ATP. Residues 352–418 (TVLIDLLVES…GKKKYFLIRY (67 aa)) enclose the S4 RNA-binding domain.

Belongs to the class-I aminoacyl-tRNA synthetase family. TyrS type 1 subfamily. As to quaternary structure, homodimer.

The protein localises to the cytoplasm. The catalysed reaction is tRNA(Tyr) + L-tyrosine + ATP = L-tyrosyl-tRNA(Tyr) + AMP + diphosphate + H(+). Catalyzes the attachment of tyrosine to tRNA(Tyr) in a two-step reaction: tyrosine is first activated by ATP to form Tyr-AMP and then transferred to the acceptor end of tRNA(Tyr). The sequence is that of Tyrosine--tRNA ligase 1 from Bacillus cereus (strain ATCC 14579 / DSM 31 / CCUG 7414 / JCM 2152 / NBRC 15305 / NCIMB 9373 / NCTC 2599 / NRRL B-3711).